The primary structure comprises 155 residues: Cytochrome c-type biogenesis protein CcmE (155 aa).

Residues 1-8 (MNPLRKKR) lie on the Cytoplasmic side of the membrane. A helical; Signal-anchor for type II membrane protein transmembrane segment spans residues 9–29 (LLIIVALLAGVGLAVTLALSA). Over 30 to 155 (LQENINLFYT…AASPTPVKQG (126 aa)) the chain is Periplasmic. H124 and Y128 together coordinate heme.

The protein belongs to the CcmE/CycJ family.

The protein resides in the cell inner membrane. Its function is as follows. Heme chaperone required for the biogenesis of c-type cytochromes. Transiently binds heme delivered by CcmC and transfers the heme to apo-cytochromes in a process facilitated by CcmF and CcmH. The sequence is that of Cytochrome c-type biogenesis protein CcmE from Pseudomonas syringae pv. syringae (strain B728a).